We begin with the raw amino-acid sequence, 229 residues long: Uracil-DNA glycosylase (229 aa).

The active-site Proton acceptor is the aspartate 64.

It belongs to the uracil-DNA glycosylase (UDG) superfamily. UNG family.

The protein localises to the cytoplasm. It carries out the reaction Hydrolyzes single-stranded DNA or mismatched double-stranded DNA and polynucleotides, releasing free uracil.. Its function is as follows. Excises uracil residues from the DNA which can arise as a result of misincorporation of dUMP residues by DNA polymerase or due to deamination of cytosine. In Escherichia coli O81 (strain ED1a), this protein is Uracil-DNA glycosylase.